Consider the following 342-residue polypeptide: Ribosomal RNA small subunit methyltransferase C (342 aa).

Belongs to the methyltransferase superfamily. RsmC family. Monomer.

It localises to the cytoplasm. The catalysed reaction is guanosine(1207) in 16S rRNA + S-adenosyl-L-methionine = N(2)-methylguanosine(1207) in 16S rRNA + S-adenosyl-L-homocysteine + H(+). Functionally, specifically methylates the guanine in position 1207 of 16S rRNA in the 30S particle. In Shewanella piezotolerans (strain WP3 / JCM 13877), this protein is Ribosomal RNA small subunit methyltransferase C.